The sequence spans 605 residues: Pescadillo homolog (605 aa).

A sufficient for interaction with ERB1 region spans residues 51–484 (KANKGSTAPT…GEEEESESES (434 aa)). Position 288 is a phosphoserine (serine 288). The stretch at 294–342 (LKSALNADEANTDETEKEEEQEKKQEKEQEKEQNEETELDTFEDNNKNK) forms a coiled coil. The tract at residues 297–342 (ALNADEANTDETEKEEEQEKKQEKEQEKEQNEETELDTFEDNNKNK) is disordered. Residues 303 to 312 (ANTDETEKEE) are compositionally biased toward acidic residues. A Phosphothreonine modification is found at threonine 308. The segment covering 313 to 327 (EQEKKQEKEQEKEQN) has biased composition (basic and acidic residues). A BRCT domain is found at 355-449 (PVASLFSAFV…ELVPANKYLP (95 aa)). Residues 459 to 605 (PWGDAIGYDP…AKLNKLDSKK (147 aa)) form a disordered region. Positions 473 to 510 (EEGEEEESESESESEDQVEEEDQEVVAGEEDDDDDEEL) are enriched in acidic residues. Positions 530–605 (EADKDVNKSK…AKLNKLDSKK (76 aa)) form a coiled coil. Residues 562 to 571 (KQKKLYKKMK) show a composition bias toward basic residues. The segment covering 575–584 (AKKEEQAENL) has biased composition (basic and acidic residues). Positions 585 to 598 (KKKKKQIAKQKAKL) are enriched in basic residues.

The protein belongs to the pescadillo family. In terms of assembly, component of the NOP7 complex, composed of ERB1, NOP7 and YTM1. The complex is held together by ERB1, which interacts with NOP7 via its N-terminal domain and with YTM1 via a high-affinity interaction between the seven-bladed beta-propeller domains of the 2 proteins. The NOP7 complex associates with the 66S pre-ribosome.

It localises to the nucleus. It is found in the nucleolus. The protein resides in the nucleoplasm. In terms of biological role, component of the NOP7 complex, which is required for maturation of the 25S and 5.8S ribosomal RNAs and formation of the 60S ribosome. In Saccharomyces cerevisiae (strain YJM789) (Baker's yeast), this protein is Pescadillo homolog.